The following is a 525-amino-acid chain: GMP synthase [glutamine-hydrolyzing] (525 aa).

The 199-residue stretch at 9–207 folds into the Glutamine amidotransferase type-1 domain; it reads RILILDFGSQ…VRDICQCEAL (199 aa). The active-site Nucleophile is Cys86. Residues His181 and Glu183 contribute to the active site. Residues 208–400 enclose the GMPS ATP-PPase domain; it reads WTPAKIIDDA…LGLPYDMLYR (193 aa). An ATP-binding site is contributed by 235–241; that stretch reads SGGVDSS.

Homodimer.

It catalyses the reaction XMP + L-glutamine + ATP + H2O = GMP + L-glutamate + AMP + diphosphate + 2 H(+). The protein operates within purine metabolism; GMP biosynthesis; GMP from XMP (L-Gln route): step 1/1. Catalyzes the synthesis of GMP from XMP. The polypeptide is GMP synthase [glutamine-hydrolyzing] (Escherichia coli O8 (strain IAI1)).